A 300-amino-acid polypeptide reads, in one-letter code: N-acetylmuramic acid 6-phosphate etherase (300 aa).

Positions 57 to 220 (VAAALRAGGR…STGAMIRIGK (164 aa)) constitute an SIS domain. The active-site Proton donor is the Glu-85. Glu-116 is a catalytic residue.

The protein belongs to the GCKR-like family. MurNAc-6-P etherase subfamily. Homodimer.

It carries out the reaction N-acetyl-D-muramate 6-phosphate + H2O = N-acetyl-D-glucosamine 6-phosphate + (R)-lactate. The protein operates within amino-sugar metabolism; 1,6-anhydro-N-acetylmuramate degradation. It participates in amino-sugar metabolism; N-acetylmuramate degradation. It functions in the pathway cell wall biogenesis; peptidoglycan recycling. Functionally, specifically catalyzes the cleavage of the D-lactyl ether substituent of MurNAc 6-phosphate, producing GlcNAc 6-phosphate and D-lactate. Together with AnmK, is also required for the utilization of anhydro-N-acetylmuramic acid (anhMurNAc) either imported from the medium or derived from its own cell wall murein, and thus plays a role in cell wall recycling. The protein is N-acetylmuramic acid 6-phosphate etherase of Klebsiella aerogenes (Enterobacter aerogenes).